The following is a 329-amino-acid chain: UDP-N-acetylenolpyruvoylglucosamine reductase (329 aa).

The FAD-binding PCMH-type domain occupies 28-192 (RVGGPADLLC…ARVEVRLRPG (165 aa)). The active site involves arginine 172. The tract at residues 204-225 (DRERRRATQPLDRPTFGSTFTN) is disordered. Residue serine 221 is the Proton donor of the active site. Residue glutamate 291 is part of the active site. The disordered stretch occupies residues 303-329 (LAGLDGHAADGGGPGAASGGARPREAT). Residues 311 to 320 (ADGGGPGAAS) show a composition bias toward gly residues.

It belongs to the MurB family. The cofactor is FAD.

The protein localises to the cytoplasm. The enzyme catalyses UDP-N-acetyl-alpha-D-muramate + NADP(+) = UDP-N-acetyl-3-O-(1-carboxyvinyl)-alpha-D-glucosamine + NADPH + H(+). It functions in the pathway cell wall biogenesis; peptidoglycan biosynthesis. Its function is as follows. Cell wall formation. The protein is UDP-N-acetylenolpyruvoylglucosamine reductase of Anaeromyxobacter dehalogenans (strain 2CP-C).